Reading from the N-terminus, the 422-residue chain is MAYFIDRRLNGKNKSMVNRQRFLRRYKSQIKQSIAEAINKRSVTDVDSGESVSIPTGDINEPMFHQGRGGTRHRVHPGNDHFVQNDRVERPQGGGGGGSGQGNASQDGEGEDEFVFQISKDEYLDLLFEDLALPNLKKNQYKQLTEYKTHRAGYTANGVPANISVVRSLQNSLARRTAMTAGKRRALHELEDELTQMENTEPVQLLEEERLRKEIAELRKKIESVPFIDTFDLRYKNYERRPEPSSQAVMFCLMDVSGSMDQATKDMAKRFYILLYLFLSRTYKNVDVVYIRHHTQAKEVDEQEFFYSQETGGTIVSSALKLMNEVVEERYDPAQWNIYAAQASDGDNWADDSPLCHELLAKKLLPMVRYYSYIEITRRAHQTLWREYEDLQAKCENFAMQHIREPDDIYPVFRELFHKQTA.

The span at 77-90 shows a compositional bias: basic and acidic residues; it reads PGNDHFVQNDRVER. Residues 77–109 are disordered; it reads PGNDHFVQNDRVERPQGGGGGGSGQGNASQDGE. Gly residues predominate over residues 92-101; sequence QGGGGGGSGQ.

This sequence belongs to the UPF0229 family.

In Serratia proteamaculans (strain 568), this protein is UPF0229 protein Spro_2732.